Consider the following 409-residue polypeptide: PPE family protein PPE32 (409 aa).

This sequence belongs to the mycobacterial PPE family. Interacts with host Toll-like receptor 2 (TLR2).

It localises to the secreted. It is found in the cell wall. The protein resides in the cell surface. Functionally, virulence factor that modulates the production of host cytokines. This chain is PPE family protein PPE32, found in Mycobacterium tuberculosis (strain CDC 1551 / Oshkosh).